A 315-amino-acid polypeptide reads, in one-letter code: tRNA dimethylallyltransferase (315 aa).

ATP is bound at residue 10 to 17; sequence GPTATGKS. 12-17 contributes to the substrate binding site; sequence TATGKS. An interaction with substrate tRNA region spans residues 35–38; sequence DSMQ.

The protein belongs to the IPP transferase family. As to quaternary structure, monomer. Mg(2+) is required as a cofactor.

It carries out the reaction adenosine(37) in tRNA + dimethylallyl diphosphate = N(6)-dimethylallyladenosine(37) in tRNA + diphosphate. Catalyzes the transfer of a dimethylallyl group onto the adenine at position 37 in tRNAs that read codons beginning with uridine, leading to the formation of N6-(dimethylallyl)adenosine (i(6)A). This is tRNA dimethylallyltransferase from Caldanaerobacter subterraneus subsp. tengcongensis (strain DSM 15242 / JCM 11007 / NBRC 100824 / MB4) (Thermoanaerobacter tengcongensis).